The following is a 224-amino-acid chain: Transcriptional regulatory protein CiaR (224 aa).

The 114-residue stretch at 3–116 folds into the Response regulatory domain; that stretch reads KILLVEDDLG…ELKMRIQALL (114 aa). Position 51 is a 4-aspartylphosphate (aspartate 51). The ompR/PhoB-type DNA-binding region spans 124–222; that stretch reads ENTLTYGNIV…LRSVGYLLKD (99 aa).

Post-translationally, phosphorylated by CiaH.

The protein resides in the cytoplasm. Member of the two-component regulatory system CiaH/CiaR. Involved in early steps of competence regulation and in penicillin susceptibility. This is Transcriptional regulatory protein CiaR (ciaR) from Streptococcus pneumoniae (strain ATCC BAA-255 / R6).